A 412-amino-acid chain; its full sequence is MKIYLVGGAVRDKLLKLPVKDHDYMVVGATPEQMLSLGYNQVGKDFPVFLHPKTGQEYALARTERKTAAGYGGFSVDAAPTVTLEQDLLRRDLTINAIAQDDAGNLYDPYNGIADLEKRILRHVSDAFVEDPLRVLRVARFAARFHGLKFTIAPETLSLMTTLSRSGELEALTAERVYLELDKALSTDNPQVFFQVLKECGALAVLFPEIEALFGVPQPENWHPEIDTGIHTMMVLEQAAKLSDDNSVRFAALVHDLGKALSPKEHLPKHHGHGQKGLPLIKSLCERFRVPNEYRDLALLVCDQHQNIHKITELRADTLVKLFDKADFWRKPQRLEQLLIACEADSKGRKGLEQTAYPQADYLKQCFAAASAVEVKSIIAQGYKGAEIRTQLNVKRIAEVQAVKGLQPIEAK.

The ATP site is built by G8 and R11. CTP contacts are provided by G8 and R11. 2 residues coordinate Mg(2+): D21 and D23. ATP contacts are provided by R91, R137, and R140. CTP is bound by residues R91, R137, and R140. In terms of domain architecture, HD spans 228–329 (TGIHTMMVLE…VKLFDKADFW (102 aa)).

It belongs to the tRNA nucleotidyltransferase/poly(A) polymerase family. Bacterial CCA-adding enzyme type 1 subfamily. As to quaternary structure, monomer. Can also form homodimers and oligomers. Mg(2+) is required as a cofactor. The cofactor is Ni(2+).

It catalyses the reaction a tRNA precursor + 2 CTP + ATP = a tRNA with a 3' CCA end + 3 diphosphate. It carries out the reaction a tRNA with a 3' CCA end + 2 CTP + ATP = a tRNA with a 3' CCACCA end + 3 diphosphate. Its function is as follows. Catalyzes the addition and repair of the essential 3'-terminal CCA sequence in tRNAs without using a nucleic acid template. Adds these three nucleotides in the order of C, C, and A to the tRNA nucleotide-73, using CTP and ATP as substrates and producing inorganic pyrophosphate. tRNA 3'-terminal CCA addition is required both for tRNA processing and repair. Also involved in tRNA surveillance by mediating tandem CCA addition to generate a CCACCA at the 3' terminus of unstable tRNAs. While stable tRNAs receive only 3'-terminal CCA, unstable tRNAs are marked with CCACCA and rapidly degraded. This chain is Multifunctional CCA protein, found in Shewanella pealeana (strain ATCC 700345 / ANG-SQ1).